The chain runs to 114 residues: Class I hydrophobin 1 (114 aa).

Positions 1-20 (MQFTKMSAFATLALATLAAA) are cleaved as a signal peptide. 4 disulfide bridges follow: Cys-33-Cys-93, Cys-40-Cys-87, Cys-41-Cys-74, and Cys-94-Cys-107.

This sequence belongs to the fungal hydrophobin family. In terms of assembly, self-assembles to form functional amyloid fibrils called rodlets. Self-assembly into fibrillar rodlets occurs spontaneously at hydrophobic:hydrophilic interfaces and the rodlets further associate laterally to form amphipathic monolayers.

It localises to the secreted. It is found in the cell wall. In terms of biological role, aerial growth, conidiation, and dispersal of filamentous fungi in the environment rely upon a capability of their secreting small amphipathic proteins called hydrophobins (HPBs) with low sequence identity. Class I can self-assemble into an outermost layer of rodlet bundles on aerial cell surfaces, conferring cellular hydrophobicity that supports fungal growth, development and dispersal; whereas Class II form highly ordered films at water-air interfaces through intermolecular interactions but contribute nothing to the rodlet structure. Pnh1 is a class I hydrophobin that might be involved in the attachment of the hydrophilic wall of hyphae to the hydrophobic surface of wood under inorganic phosphate (Pi)-deficient conditions and enable the mycelium to degrade efficiently the components of wood and to acquire nutrients containing Pi. The chain is Class I hydrophobin 1 from Pholiota nameko.